Consider the following 376-residue polypeptide: 23S rRNA (uracil(747)-C(5))-methyltransferase RlmC (376 aa).

Cysteine 3, cysteine 11, cysteine 14, and cysteine 87 together coordinate [4Fe-4S] cluster. S-adenosyl-L-methionine-binding residues include glutamine 212, phenylalanine 241, glutamate 262, and asparagine 307. Cysteine 334 acts as the Nucleophile in catalysis.

The protein belongs to the class I-like SAM-binding methyltransferase superfamily. RNA M5U methyltransferase family. RlmC subfamily.

It catalyses the reaction uridine(747) in 23S rRNA + S-adenosyl-L-methionine = 5-methyluridine(747) in 23S rRNA + S-adenosyl-L-homocysteine + H(+). Functionally, catalyzes the formation of 5-methyl-uridine at position 747 (m5U747) in 23S rRNA. The protein is 23S rRNA (uracil(747)-C(5))-methyltransferase RlmC of Yersinia pseudotuberculosis serotype O:1b (strain IP 31758).